The chain runs to 313 residues: Nematocyst expressed protein 8 (313 aa).

An N-terminal signal peptide occupies residues 1–19 (MLRRPLLLVLFTVFSTLYA). The segment at 24–56 (GVSPPTNESEAEVSPGDDEGPPEPGNEPDVNWR) is disordered. The span at 32 to 44 (SEAEVSPGDDEGP) shows a compositional bias: acidic residues. ShKT domains are found at residues 65–99 (CKDK…CRFC), 109–145 (CKDL…CELC), and 151–186 (FKYT…CRKY). Cystine bridges form between Cys-65–Cys-99, Cys-72–Cys-92, Cys-81–Cys-96, Cys-109–Cys-145, Cys-127–Cys-142, Cys-160–Cys-179, and Cys-169–Cys-183. Positions 222 to 244 (TAAPSTQPAETTKAPPNTAAPTA) are enriched in low complexity. The interval 222–313 (TAAPSTQPAE…LCDEKHSSQQ (92 aa)) is disordered. The span at 245–265 (APTPAPTPAPAPAPTPAPVAP) shows a compositional bias: pro residues. The segment covering 280-297 (TPEEQDDNSADESTEIEA) has biased composition (acidic residues).

It belongs to the NEP3 family. In terms of tissue distribution, nematocytes. In late planulae, is only expressed in a handful of nematocytes in the lower pharynx. Is absent from the tentacles and outer body wall.

It localises to the nematocyst. It is found in the secreted. Its function is as follows. Probable toxin probably only used for predation. The sequence is that of Nematocyst expressed protein 8 from Nematostella vectensis (Starlet sea anemone).